A 163-amino-acid chain; its full sequence is UPF0478 protein SAB1599c (163 aa).

Residues 7–27 form a helical membrane-spanning segment; the sequence is IAGIIAAIAFLILCIGIVAVL.

Belongs to the UPF0478 family.

It localises to the cell membrane. This chain is UPF0478 protein SAB1599c, found in Staphylococcus aureus (strain bovine RF122 / ET3-1).